A 75-amino-acid polypeptide reads, in one-letter code: Exodeoxyribonuclease 7 small subunit (75 aa).

Belongs to the XseB family. Heterooligomer composed of large and small subunits.

The protein localises to the cytoplasm. The catalysed reaction is Exonucleolytic cleavage in either 5'- to 3'- or 3'- to 5'-direction to yield nucleoside 5'-phosphates.. In terms of biological role, bidirectionally degrades single-stranded DNA into large acid-insoluble oligonucleotides, which are then degraded further into small acid-soluble oligonucleotides. The protein is Exodeoxyribonuclease 7 small subunit of Nostoc punctiforme (strain ATCC 29133 / PCC 73102).